A 249-amino-acid polypeptide reads, in one-letter code: 5'-nucleotidase SurE (249 aa).

Residues aspartate 8, aspartate 9, serine 39, and asparagine 96 each coordinate a divalent metal cation.

The protein belongs to the SurE nucleotidase family. Requires a divalent metal cation as cofactor.

It is found in the cytoplasm. The catalysed reaction is a ribonucleoside 5'-phosphate + H2O = a ribonucleoside + phosphate. Nucleotidase that shows phosphatase activity on nucleoside 5'-monophosphates. The chain is 5'-nucleotidase SurE from Clostridium tetani (strain Massachusetts / E88).